The sequence spans 628 residues: 1-deoxy-D-xylulose-5-phosphate synthase (628 aa).

Thiamine diphosphate is bound by residues His-72 and 113-115 (GHS). Residue Asp-144 coordinates Mg(2+). Thiamine diphosphate contacts are provided by residues 145-146 (GA), Asn-173, Tyr-284, and Glu-367. Mg(2+) is bound at residue Asn-173.

The protein belongs to the transketolase family. DXPS subfamily. Homodimer. The cofactor is Mg(2+). It depends on thiamine diphosphate as a cofactor.

It catalyses the reaction D-glyceraldehyde 3-phosphate + pyruvate + H(+) = 1-deoxy-D-xylulose 5-phosphate + CO2. It participates in metabolic intermediate biosynthesis; 1-deoxy-D-xylulose 5-phosphate biosynthesis; 1-deoxy-D-xylulose 5-phosphate from D-glyceraldehyde 3-phosphate and pyruvate: step 1/1. Catalyzes the acyloin condensation reaction between C atoms 2 and 3 of pyruvate and glyceraldehyde 3-phosphate to yield 1-deoxy-D-xylulose-5-phosphate (DXP). The chain is 1-deoxy-D-xylulose-5-phosphate synthase from Exiguobacterium sibiricum (strain DSM 17290 / CCUG 55495 / CIP 109462 / JCM 13490 / 255-15).